A 128-amino-acid polypeptide reads, in one-letter code: Cytochrome c-type biogenesis protein CcmE (128 aa).

Residues 1–7 (MKKKHKR) are Cytoplasmic-facing. A helical; Signal-anchor for type II membrane protein membrane pass occupies residues 8–28 (LLVASGIFFFLNCIVFFILTI). The Extracellular segment spans residues 29–128 (LRENISFFYT…KHDENYMPRK (100 aa)). Heme contacts are provided by His120 and Tyr124.

It belongs to the CcmE/CycJ family.

The protein localises to the cell membrane. Functionally, heme chaperone required for the biogenesis of c-type cytochromes. Transiently binds heme delivered by CcmC and transfers the heme to apo-cytochromes in a process facilitated by CcmF and CcmH. This chain is Cytochrome c-type biogenesis protein CcmE, found in Wolbachia sp. subsp. Brugia malayi (strain TRS).